We begin with the raw amino-acid sequence, 106 residues long: Large ribosomal subunit protein P2 (106 aa).

The segment at 79-106 (GAGAVAEAKKEEPEEEEADDDMGFGLFD) is disordered. Residues 91-100 (PEEEEADDDM) are compositionally biased toward acidic residues.

Belongs to the eukaryotic ribosomal protein P1/P2 family. P1 and P2 exist as dimers at the large ribosomal subunit. In terms of processing, phosphorylated.

In terms of biological role, plays an important role in the elongation step of protein synthesis. The sequence is that of Large ribosomal subunit protein P2 (LIP) from Leishmania infantum.